Reading from the N-terminus, the 1111-residue chain is MFTLYKSLKFNLFVKSAFKVILNEPLLNPLTKEIFIVNNKETEQWIKIFIAKKYKVCTNIKFFKLKHFILNILKQNTPKLYSKSEFSKYSIMWKIINIPDIQHLLTKIVSKNNTYSTLFKIASSISNLFQLYLKYRPDYIKKWEQKSNIPKTRLKQKWQQIIWMRIIKYTKDANKPILHFSNLLYDSIKKMQRNNFINTKLPVRIFIFNITPITPQYAIFLKSISKYCSVHFFYATASYNDKQMFSTSFIKFKQTQEISNNQLLSLLHSKNKNIIYHEIENFQKNTKFQSYWITYEYEQMLFLSLIKDKTINLNFKIKQNSLLQYLQNKILNLHSIQKKNNEQENNKILILKTDKSLSIHSCHTLIREIEVLHNNLLNILNDNNDILFQDVLVISKNLDTYIPYINQIFNSASSKNFIPFSINYKNIKNIEFYKTILELIDLPNIELNINKITNLLNIPTLLKKVQINEQEIPILLQIINQTEIQWENDNILSNDWLSNDITKCWEHGLQRIFLGQIINNIDYKFWENIVPYNEFSTLYYNIFNKLISLISLLNKWKKILSKPKFLSHWDITFKKLLNDFFTDHEQKQPEAKLIIKKWTEIIHSGMQEKYTKKISITLLKNELCNSVSYISQSNYLFSGKITFCNNFTLTNIPFKIIYLIGLNDNISSNTHESFDIYNLLKLHPRAYDPCDEINHKNLLLKTLLSAKKFFYISHQIVSNNYKKLNNIPIAIDKIIKYITQYFYIKNKNKDNFNDNLKDIKSHIYHNYTFYAHEKRNFLEKLNYPNFNTTIWKMATLINNSHKEFIKKLPSIKNQTINYNTLILFWKNPIQTFFHVRLNIQLNTTKNKHMHQNKHFINKLDQYKMNKTLLKFFLYKQNTNQLFQYYKNIGIIPNNNIGNIIWEYTKKLITPLYDQIMKIKKILNNSKFCINVKNKCMLHGQLKNINSSGGLLRWKATKLSFQDIISCWLEHLLYCSLYKKHNSILIGTNHQIITFYKLENKTAKYYLKKYISGYFDGMEQPILLTKSGINWINAIYDKKNNKFYTNTNKNLNAYKIFLNTWNGNNWITGEKDDPYIQKMIVYLTKKNIQKIYKTTKKWLTPILKNISYSKYH.

This sequence belongs to the RecC family. As to quaternary structure, heterotrimer of RecB, RecC and RecD. All subunits contribute to DNA-binding.

Its function is as follows. A helicase/nuclease that prepares dsDNA breaks (DSB) for recombinational DNA repair. Binds to DSBs and unwinds DNA via a highly rapid and processive ATP-dependent bidirectional helicase activity. Unwinds dsDNA until it encounters a Chi (crossover hotspot instigator) sequence from the 3' direction. Cuts ssDNA a few nucleotides 3' to the Chi site. The properties and activities of the enzyme are changed at Chi. The Chi-altered holoenzyme produces a long 3'-ssDNA overhang and facilitates RecA-binding to the ssDNA for homologous DNA recombination and repair. Holoenzyme degrades any linearized DNA that is unable to undergo homologous recombination. In the holoenzyme this subunit recognizes the wild-type Chi sequence, and when added to isolated RecB increases its ATP-dependent helicase processivity. This Buchnera aphidicola subsp. Baizongia pistaciae (strain Bp) protein is RecBCD enzyme subunit RecC.